The sequence spans 229 residues: Enolase-phosphatase E1 (229 aa).

Positions Asp-206–Ala-229 are disordered. Positions Arg-218–Ala-229 are enriched in basic and acidic residues.

The protein belongs to the HAD-like hydrolase superfamily. MasA/MtnC family. Monomer. Mg(2+) is required as a cofactor.

It catalyses the reaction 5-methylsulfanyl-2,3-dioxopentyl phosphate + H2O = 1,2-dihydroxy-5-(methylsulfanyl)pent-1-en-3-one + phosphate. Its pathway is amino-acid biosynthesis; L-methionine biosynthesis via salvage pathway; L-methionine from S-methyl-5-thio-alpha-D-ribose 1-phosphate: step 3/6. It participates in amino-acid biosynthesis; L-methionine biosynthesis via salvage pathway; L-methionine from S-methyl-5-thio-alpha-D-ribose 1-phosphate: step 4/6. Its function is as follows. Bifunctional enzyme that catalyzes the enolization of 2,3-diketo-5-methylthiopentyl-1-phosphate (DK-MTP-1-P) into the intermediate 2-hydroxy-3-keto-5-methylthiopentenyl-1-phosphate (HK-MTPenyl-1-P), which is then dephosphorylated to form the acireductone 1,2-dihydroxy-3-keto-5-methylthiopentene (DHK-MTPene). The polypeptide is Enolase-phosphatase E1 (Klebsiella oxytoca).